The chain runs to 489 residues: Betaine aldehyde dehydrogenase (489 aa).

K(+) contacts are provided by T26 and D93. 150 to 152 contributes to the NAD(+) binding site; that stretch reads GAW. K162 (charge relay system) is an active-site residue. 176–179 provides a ligand contact to NAD(+); it reads KPSE. V180 is a binding site for K(+). 229–232 contacts NAD(+); that stretch reads GVET. L245 is a binding site for K(+). The active-site Proton acceptor is E251. 3 residues coordinate NAD(+): G253, C285, and E386. C285 functions as the Nucleophile in the catalytic mechanism. C285 is modified (cysteine sulfenic acid (-SOH)). Positions 456 and 459 each coordinate K(+). The active-site Charge relay system is the E463.

This sequence belongs to the aldehyde dehydrogenase family. In terms of assembly, dimer of dimers. K(+) serves as cofactor.

The enzyme catalyses betaine aldehyde + NAD(+) + H2O = glycine betaine + NADH + 2 H(+). It functions in the pathway amine and polyamine biosynthesis; betaine biosynthesis via choline pathway; betaine from betaine aldehyde: step 1/1. Involved in the biosynthesis of the osmoprotectant glycine betaine. Catalyzes the irreversible oxidation of betaine aldehyde to the corresponding acid. The protein is Betaine aldehyde dehydrogenase of Burkholderia lata (strain ATCC 17760 / DSM 23089 / LMG 22485 / NCIMB 9086 / R18194 / 383).